Reading from the N-terminus, the 1068-residue chain is MPLNKDIKKVLVIGSGPIVIGQAAEFDYSGTQACEGLKEEGVEVVLINSNPATIMTDKKVADKVYLEPLTVEFVEKVIAKERPDSLLAGMGGQTGLNLAVELYDKGILKKYGVNVIGTSIESIKEGEDRELFRNVMSRINGPVIQSEIVTDMENGKAFANKIGYPIIVRPAYTLGGTGGGIAESEEELDEILALGLQLSSIGQVLLEKSVKGWKEIEYEVMRDSRGNCITVCNMENIDPVGIHTGDSIVVAPSQTLSDKEYQMLRSASINILNSIGIKGGCNVQFALNPNSFEYAVIEINPRVSRSSALASKATGYPIAKVASKIALGYTLDEIKNAVTQKTYACFEPSLDYVVVKIPKWPFDKFQGADRVLGTKMMATGEIMAIGSNFEAAFLKGTRSLEIGKYSLEHKKFRELSIEELKTRVISPDDERIFALAEMLRRDYRMDKVAEITGIDKFFIKKFRWIVEEEQRLRLSKIDDLDKEWLYKLKKKGFSDKGIADMLKVNPEDIYRLRNIWRINPVYKMVDTCGGEFEALSPYYYSTYDVYDEVEVSKNKKVIVIGSGPIRIGQGIEFDYASVHCVKALKKLGIETIIVNNNPETVSTDFDVSDKLYFEPLTEEDVLNIVEKEKPDGVILQFGGQTAIKLANFLKEKNISTLGTTADQIDMAEDREKFDELLEKLKIARPKGKGIWSVEDGLEEAKKLGFPVLVRPSYVLGGQGMEITHDEKELVYYLSNAFQKDKKNPILIDKYLMGREIEVDAISDGEDVLIPGIMEHLERAGVHSGDSITMYPTQNVSKDIKEKILEYTKKLALGIGIKGMINIQFIEFQGNLYVIEVNPRASRTVPYISKVSKVPIVDIATRVMLGEKLNDLGYGVGVYKEPELISVKVPVFSTQKLPRVEVCLGPEMKSTGEVLGVGKTLEEALYKGFIGANMSIKKEKGTVLATINDHDKEEFLPIAKKLHSLGYKFIATSKTAELLKEEGIEVKQVRKLKEESPNIIDTIKNDEVDLVVNTPTKGNDSKRDGFHIRRAAIERNLGVITSLDTLKAIVDIKFKEIKDETLYIFDLSN.

The carboxyphosphate synthetic domain stretch occupies residues 1 to 401 (MPLNKDIKKV…AFLKGTRSLE (401 aa)). Residues Arg129, Arg169, Gly175, Gly176, Lys208, Val210, Glu215, Gly241, Ile242, His243, Gln284, and Glu298 each contribute to the ATP site. Residues 133–327 (RNVMSRINGP…IAKVASKIAL (195 aa)) enclose the ATP-grasp 1 domain. Mg(2+)-binding residues include Gln284, Glu298, and Asn300. The Mn(2+) site is built by Gln284, Glu298, and Asn300. The tract at residues 402–549 (IGKYSLEHKK…YSTYDVYDEV (148 aa)) is oligomerization domain. The segment at 550–932 (EVSKNKKVIV…ALYKGFIGAN (383 aa)) is carbamoyl phosphate synthetic domain. Residues 674-864 (DELLEKLKIA…IVDIATRVML (191 aa)) enclose the ATP-grasp 2 domain. ATP-binding residues include Arg710, Lys749, Leu751, Glu755, Gly780, Val781, His782, Ser783, Gln823, and Glu835. Mg(2+) is bound by residues Gln823, Glu835, and Asn837. Residues Gln823, Glu835, and Asn837 each coordinate Mn(2+). Residues 933–1068 (MSIKKEKGTV…ETLYIFDLSN (136 aa)) form the MGS-like domain. The interval 933-1068 (MSIKKEKGTV…ETLYIFDLSN (136 aa)) is allosteric domain.

It belongs to the CarB family. Composed of two chains; the small (or glutamine) chain promotes the hydrolysis of glutamine to ammonia, which is used by the large (or ammonia) chain to synthesize carbamoyl phosphate. Tetramer of heterodimers (alpha,beta)4. Mg(2+) is required as a cofactor. Requires Mn(2+) as cofactor.

It carries out the reaction hydrogencarbonate + L-glutamine + 2 ATP + H2O = carbamoyl phosphate + L-glutamate + 2 ADP + phosphate + 2 H(+). The catalysed reaction is hydrogencarbonate + NH4(+) + 2 ATP = carbamoyl phosphate + 2 ADP + phosphate + 2 H(+). Its pathway is amino-acid biosynthesis; L-arginine biosynthesis; carbamoyl phosphate from bicarbonate: step 1/1. It participates in pyrimidine metabolism; UMP biosynthesis via de novo pathway; (S)-dihydroorotate from bicarbonate: step 1/3. Large subunit of the glutamine-dependent carbamoyl phosphate synthetase (CPSase). CPSase catalyzes the formation of carbamoyl phosphate from the ammonia moiety of glutamine, carbonate, and phosphate donated by ATP, constituting the first step of 2 biosynthetic pathways, one leading to arginine and/or urea and the other to pyrimidine nucleotides. The large subunit (synthetase) binds the substrates ammonia (free or transferred from glutamine from the small subunit), hydrogencarbonate and ATP and carries out an ATP-coupled ligase reaction, activating hydrogencarbonate by forming carboxy phosphate which reacts with ammonia to form carbamoyl phosphate. The protein is Carbamoyl phosphate synthase large chain of Clostridium botulinum (strain Kyoto / Type A2).